The chain runs to 404 residues: Dihydrosphingosine 1-phosphate phosphatase YSR3 (404 aa).

The Lumenal portion of the chain corresponds to 1–86 (MTIIQTVTEL…PFRDVYFKYT (86 aa)). N-linked (GlcNAc...) asparagine glycosylation is present at Asn-62. The chain crosses the membrane as a helical span at residues 87 to 107 (SLMGSHMFYVIVLPMPVWLGY). At 108 to 113 (RDLTRD) the chain is on the cytoplasmic side. A helical transmembrane segment spans residues 114 to 134 (MIYVLGYSIYLSGYLKDYWCL). A phosphatase sequence motif I region spans residues 129-137 (KDYWCLPRP). Residues 135 to 154 (PRPKSPPVDRITLSEYTTKE) are Lumenal-facing. The helical transmembrane segment at 155 to 176 (YGAPSSHSANATAVSLLFFWRI) threads the bilayer. The interval 158–161 (PSSH) is phosphatase sequence motif II. His-161 (proton donor) is an active-site residue. The Cytoplasmic portion of the chain corresponds to 177 to 182 (CLSDTL). Residues 183-203 (VWPTKLLLLSLVIFYYLTLVF) traverse the membrane as a helical segment. The Lumenal segment spans residues 204–215 (GRVYCGMHGMLD). The phosphatase sequence motif III stretch occupies residues 204–215 (GRVYCGMHGMLD). His-211 (nucleophile) is an active-site residue. The helical transmembrane segment at 216 to 236 (LFSGAAVGAICFFIRIWVVHA) threads the bilayer. Residues 237 to 241 (LRNFQ) lie on the Cytoplasmic side of the membrane. The helical transmembrane segment at 242-262 (IGEHLWFPLLSVAWGLFILFN) threads the bilayer. The Lumenal segment spans residues 263-319 (HVRPIDECPCFEDSVAFIGVVSGLDCSDWLTERYGWNLVCSRYASCGSKVFLRPLVG). The chain crosses the membrane as a helical span at residues 320–340 (VASVIVWKDVISKTAVYTLLI). The Cytoplasmic segment spans residues 341-379 (KLLRFHDDRSEKVHFHNETSEEEECLLYSGVSKVEIVGR). Residues 380–400 (FLIYAGIPTTVFLLCPVFFTW) traverse the membrane as a helical segment. Topologically, residues 401-404 (TNLR) are lumenal.

The protein belongs to the type 2 lipid phosphate phosphatase family.

It is found in the endoplasmic reticulum membrane. It catalyses the reaction sphinganine 1-phosphate + H2O = sphinganine + phosphate. Dihydrosphingosine 1-phosphate phosphatase required for efficient ceramide synthesis from exogenous sphingoid bases. Involved in endocytosis and calcium-mediated signaling. The sequence is that of Dihydrosphingosine 1-phosphate phosphatase YSR3 from Saccharomyces cerevisiae (strain ATCC 204508 / S288c) (Baker's yeast).